Reading from the N-terminus, the 424-residue chain is Histidine--tRNA ligase (424 aa).

This sequence belongs to the class-II aminoacyl-tRNA synthetase family. In terms of assembly, homodimer.

Its subcellular location is the cytoplasm. The catalysed reaction is tRNA(His) + L-histidine + ATP = L-histidyl-tRNA(His) + AMP + diphosphate + H(+). The chain is Histidine--tRNA ligase from Yersinia pestis bv. Antiqua (strain Antiqua).